The chain runs to 256 residues: GTP cyclohydrolase FolE2 (256 aa).

It belongs to the GTP cyclohydrolase IV family.

The catalysed reaction is GTP + H2O = 7,8-dihydroneopterin 3'-triphosphate + formate + H(+). The protein operates within cofactor biosynthesis; 7,8-dihydroneopterin triphosphate biosynthesis; 7,8-dihydroneopterin triphosphate from GTP: step 1/1. Converts GTP to 7,8-dihydroneopterin triphosphate. The protein is GTP cyclohydrolase FolE2 of Maridesulfovibrio salexigens (strain ATCC 14822 / DSM 2638 / NCIMB 8403 / VKM B-1763) (Desulfovibrio salexigens).